The sequence spans 481 residues: MSYIKKLRARLDSGEISAVELTKEYLAKIKEQDKRINSVITLCEAEALKEAEDADAIISAGKQGLLTGIPILHKDLFCTKGIRTTAASKMLDNFVAPYDSTVTKNCKDQGMVTLGKLNMDEFAMGSTNEYSYYGAVSNPWDLERVPGGSSGGSAAAVAAGFAPISTGSDTGGSVRQPASFCGLTAMKPSYGSTSRFGMVAFASSFDQAGIFGHYAEDVAIMLDAIAGECEFDSTCVGVKQNHFTQDLEKDISGKVIGVDESLIKDLPAQIQEAVSKTLDNFKKLGAEIKSVKVPDLKEALSTYYIITPAEAAANLARYDGIRYGYRNPEARDLDELYRKSRTDGFGAEVKRRIMIGNYVLASSQYDSYYNKAQQLRKVMTDQINQIFTQVDAIFMPASPSEAFKKGDKLDPVSAYLSDIYTIPANISGLPAIAFPIGFANNLPVGGQLMAKAFNDNILTQMVVQYQKHYGIEEFILQQARI.

Catalysis depends on charge relay system residues K74 and S149. The Acyl-ester intermediate role is filled by S173.

It belongs to the amidase family. GatA subfamily. Heterotrimer of A, B and C subunits.

It carries out the reaction L-glutamyl-tRNA(Gln) + L-glutamine + ATP + H2O = L-glutaminyl-tRNA(Gln) + L-glutamate + ADP + phosphate + H(+). Allows the formation of correctly charged Gln-tRNA(Gln) through the transamidation of misacylated Glu-tRNA(Gln) in organisms which lack glutaminyl-tRNA synthetase. The reaction takes place in the presence of glutamine and ATP through an activated gamma-phospho-Glu-tRNA(Gln). The chain is Glutamyl-tRNA(Gln) amidotransferase subunit A from Francisella tularensis subsp. tularensis (strain WY96-3418).